A 475-amino-acid chain; its full sequence is Bifunctional aspartate aminotransferase and glutamate/aspartate-prephenate aminotransferase (475 aa).

Residues 1 to 55 constitute a chloroplast transit peptide; it reads MASQSSVAVISSAAARGESFPDSKKPIGSVRFQQPLRLSFSYCKSGNMSSRICAM. L-aspartate is bound by residues Gly-107, Trp-193, and Asn-243. Residue Lys-306 is modified to N6-(pyridoxal phosphate)lysine. Arg-445 lines the L-aspartate pocket.

It belongs to the class-I pyridoxal-phosphate-dependent aminotransferase family. In terms of assembly, homodimer. The cofactor is pyridoxal 5'-phosphate.

It is found in the plastid. It localises to the chloroplast. The catalysed reaction is L-aspartate + 2-oxoglutarate = oxaloacetate + L-glutamate. It catalyses the reaction L-arogenate + oxaloacetate = prephenate + L-aspartate. The enzyme catalyses L-arogenate + 2-oxoglutarate = prephenate + L-glutamate. Its pathway is amino-acid biosynthesis; L-phenylalanine biosynthesis; L-arogenate from prephenate (L-Asp route): step 1/1. It functions in the pathway amino-acid biosynthesis; L-phenylalanine biosynthesis; L-arogenate from prephenate (L-Glu route): step 1/1. Functionally, prokaryotic-type aspartate aminotransferase. Also has a prenate transaminase activity. Involved in the aromatic amino acids biosynthesis pathway via the arogenate route. Required for the transamination of prephenate into arogenate. Required for early development of the embryo. This is Bifunctional aspartate aminotransferase and glutamate/aspartate-prephenate aminotransferase (PAT) from Arabidopsis thaliana (Mouse-ear cress).